A 299-amino-acid polypeptide reads, in one-letter code: Ethylmalonyl-CoA decarboxylase (299 aa).

The protein belongs to the enoyl-CoA hydratase/isomerase family.

Its subcellular location is the cytoplasm. It localises to the cytosol. It carries out the reaction (2S)-ethylmalonyl-CoA + H(+) = butanoyl-CoA + CO2. The enzyme catalyses (S)-methylmalonyl-CoA + H(+) = propanoyl-CoA + CO2. It catalyses the reaction (2R)-ethylmalonyl-CoA + H(+) = butanoyl-CoA + CO2. In terms of biological role, decarboxylates ethylmalonyl-CoA, a potentially toxic metabolite, to form butyryl-CoA, suggesting it might be involved in metabolite proofreading. Acts preferentially on (S)-ethylmalonyl-CoA but also has some activity on the (R)-isomer. Also has methylmalonyl-CoA decarboxylase activity at lower level. This is Ethylmalonyl-CoA decarboxylase (echdc1) from Xenopus laevis (African clawed frog).